The sequence spans 83 residues: Large ribosomal subunit protein eL31 (83 aa).

Belongs to the eukaryotic ribosomal protein eL31 family.

In Methanococcus vannielii (strain ATCC 35089 / DSM 1224 / JCM 13029 / OCM 148 / SB), this protein is Large ribosomal subunit protein eL31.